A 539-amino-acid chain; its full sequence is Eukaryotic translation initiation factor 3 subunit L (539 aa).

One can recognise a PCI domain in the interval 306–514; the sequence is TFSDILLYIQ…IHIADTKVSH (209 aa).

Belongs to the eIF-3 subunit L family. Component of the eukaryotic translation initiation factor 3 (eIF-3) complex. The eIF-3 complex interacts with pix.

It is found in the cytoplasm. Component of the eukaryotic translation initiation factor 3 (eIF-3) complex, which is involved in protein synthesis of a specialized repertoire of mRNAs and, together with other initiation factors, stimulates binding of mRNA and methionyl-tRNAi to the 40S ribosome. The eIF-3 complex specifically targets and initiates translation of a subset of mRNAs involved in cell proliferation. This Drosophila yakuba (Fruit fly) protein is Eukaryotic translation initiation factor 3 subunit L.